Consider the following 115-residue polypeptide: Holo-[acyl-carrier-protein] synthase (115 aa).

Mg(2+) contacts are provided by aspartate 8 and glutamate 50.

The protein belongs to the P-Pant transferase superfamily. AcpS family. It depends on Mg(2+) as a cofactor.

It is found in the cytoplasm. The enzyme catalyses apo-[ACP] + CoA = holo-[ACP] + adenosine 3',5'-bisphosphate + H(+). Functionally, transfers the 4'-phosphopantetheine moiety from coenzyme A to a Ser of acyl-carrier-protein. The protein is Holo-[acyl-carrier-protein] synthase of Arthrobacter sp. (strain FB24).